We begin with the raw amino-acid sequence, 193 residues long: Ion-translocating oxidoreductase complex subunit A (193 aa).

Helical transmembrane passes span 5–25 (LLLL…FLGL), 39–59 (IGMG…SYLV), 67–87 (LGIE…VVQF), 102–122 (VLGI…VALL), 134–154 (IIYG…FSAM), and 171–191 (SIAM…TGLV).

It belongs to the NqrDE/RnfAE family. As to quaternary structure, the complex is composed of six subunits: RnfA, RnfB, RnfC, RnfD, RnfE and RnfG.

It is found in the cell inner membrane. Its function is as follows. Part of a membrane-bound complex that couples electron transfer with translocation of ions across the membrane. In Aliivibrio fischeri (strain ATCC 700601 / ES114) (Vibrio fischeri), this protein is Ion-translocating oxidoreductase complex subunit A.